A 239-amino-acid chain; its full sequence is Ribonuclease PH (239 aa).

Phosphate-binding positions include Arg-86 and 124–126; that span reads GTR.

The protein belongs to the RNase PH family. Homohexameric ring arranged as a trimer of dimers.

The catalysed reaction is tRNA(n+1) + phosphate = tRNA(n) + a ribonucleoside 5'-diphosphate. Its function is as follows. Phosphorolytic 3'-5' exoribonuclease that plays an important role in tRNA 3'-end maturation. Removes nucleotide residues following the 3'-CCA terminus of tRNAs; can also add nucleotides to the ends of RNA molecules by using nucleoside diphosphates as substrates, but this may not be physiologically important. Probably plays a role in initiation of 16S rRNA degradation (leading to ribosome degradation) during starvation. The chain is Ribonuclease PH from Rhizobium johnstonii (strain DSM 114642 / LMG 32736 / 3841) (Rhizobium leguminosarum bv. viciae).